Consider the following 323-residue polypeptide: Mediator of RNA polymerase II transcription subunit 4 (323 aa).

Positions 1–36 (MLPFKKADSPFKSNPVSRVGSSTRLNQLGNIKSNPT) are disordered. Positions 11–36 (FKSNPVSRVGSSTRLNQLGNIKSNPT) are enriched in polar residues. A coiled-coil region spans residues 79-167 (MVQKVNEYER…VSYRNELKKL (89 aa)). 2 stretches are compositionally biased toward basic and acidic residues: residues 241–262 (HELG…KVDH) and 282–303 (DEQR…KEEQ). A disordered region spans residues 241–323 (HELGETDKEN…LFDPDDEYSD (83 aa)).

This sequence belongs to the Mediator complex subunit 4 family. As to quaternary structure, component of the Mediator complex.

The protein localises to the nucleus. In terms of biological role, component of the Mediator complex, a coactivator involved in the regulated transcription of nearly all RNA polymerase II-dependent genes. Mediator functions as a bridge to convey information from gene-specific regulatory proteins to the basal RNA polymerase II transcription machinery. Mediator is recruited to promoters by direct interactions with regulatory proteins and serves as a scaffold for the assembly of a functional preinitiation complex with RNA polymerase II and the general transcription factors. This is Mediator of RNA polymerase II transcription subunit 4 (MED4) from Candida albicans (strain SC5314 / ATCC MYA-2876) (Yeast).